The chain runs to 297 residues: Lipoyl synthase (297 aa).

7 residues coordinate [4Fe-4S] cluster: C37, C42, C48, C63, C67, C70, and S276. The Radical SAM core domain maps to 49–265; the sequence is WSRKHATVMI…ERIAKTKGFL (217 aa).

The protein belongs to the radical SAM superfamily. Lipoyl synthase family. [4Fe-4S] cluster is required as a cofactor.

The protein resides in the cytoplasm. It carries out the reaction [[Fe-S] cluster scaffold protein carrying a second [4Fe-4S](2+) cluster] + N(6)-octanoyl-L-lysyl-[protein] + 2 oxidized [2Fe-2S]-[ferredoxin] + 2 S-adenosyl-L-methionine + 4 H(+) = [[Fe-S] cluster scaffold protein] + N(6)-[(R)-dihydrolipoyl]-L-lysyl-[protein] + 4 Fe(3+) + 2 hydrogen sulfide + 2 5'-deoxyadenosine + 2 L-methionine + 2 reduced [2Fe-2S]-[ferredoxin]. It participates in protein modification; protein lipoylation via endogenous pathway; protein N(6)-(lipoyl)lysine from octanoyl-[acyl-carrier-protein]: step 2/2. Functionally, catalyzes the radical-mediated insertion of two sulfur atoms into the C-6 and C-8 positions of the octanoyl moiety bound to the lipoyl domains of lipoate-dependent enzymes, thereby converting the octanoylated domains into lipoylated derivatives. The protein is Lipoyl synthase of Rickettsia prowazekii (strain Madrid E).